The sequence spans 322 residues: ATP-dependent 6-phosphofructokinase (322 aa).

Residues Gly12, 73–74, and 103–106 contribute to the ATP site; these read RF and GDGT. Mg(2+) is bound at residue Asp104. 126–128 serves as a coordination point for substrate; sequence TID. Asp128 serves as the catalytic Proton acceptor. Arg155 contributes to the ADP binding site. Substrate-binding positions include Arg163 and 170-172; that span reads MGR. ADP-binding positions include 186–188, Lys212, and 214–216; these read GSE and KPS. Substrate is bound by residues Glu223, Arg245, and 251-254; that span reads HTQR.

This sequence belongs to the phosphofructokinase type A (PFKA) family. ATP-dependent PFK group I subfamily. Prokaryotic clade 'B1' sub-subfamily. As to quaternary structure, homotetramer. Mg(2+) is required as a cofactor.

The protein resides in the cytoplasm. It carries out the reaction beta-D-fructose 6-phosphate + ATP = beta-D-fructose 1,6-bisphosphate + ADP + H(+). It functions in the pathway carbohydrate degradation; glycolysis; D-glyceraldehyde 3-phosphate and glycerone phosphate from D-glucose: step 3/4. Allosterically activated by ADP and other diphosphonucleosides, and allosterically inhibited by phosphoenolpyruvate. Catalyzes the phosphorylation of D-fructose 6-phosphate to fructose 1,6-bisphosphate by ATP, the first committing step of glycolysis. The polypeptide is ATP-dependent 6-phosphofructokinase (Mesomycoplasma hyopneumoniae (strain J / ATCC 25934 / NCTC 10110) (Mycoplasma hyopneumoniae)).